A 439-amino-acid chain; its full sequence is C4-dicarboxylate transport protein 1 (439 aa).

The next 6 helical transmembrane spans lie at 18–38 (VLYI…WLWP), 56–76 (LIKM…IAHV), 91–111 (IYFE…ANVI), 157–177 (GEIL…MSLG), 193–213 (AIFG…FGAM), and 231–251 (LIAT…GIIA).

It belongs to the dicarboxylate/amino acid:cation symporter (DAACS) (TC 2.A.23) family.

Its subcellular location is the cell inner membrane. In terms of biological role, responsible for the transport of dicarboxylates such as succinate, fumarate, and malate from the periplasm across the membrane. This is C4-dicarboxylate transport protein 1 from Bradyrhizobium sp. (strain ORS 278).